The primary structure comprises 351 residues: Protein EXPRESSION OF TERPENOIDS 1 (351 aa).

Residues 1 to 23 (MANFFSLGGNQEQQHQEISSSQA) are disordered. Over residues 11–22 (QEQQHQEISSSQ) the composition is skewed to low complexity. 6 residues coordinate Zn(2+): cysteine 129, cysteine 132, cysteine 140, cysteine 145, cysteine 149, and cysteine 156. Residues 129–156 (CQDCGNQAKKDCQHMRCRTCCKSRGFQC) constitute a DNA-binding region (zn(2)-C6 fungal-type; degenerate). A disordered region spans residues 170–219 (RRERQQQLAALQQQQQGHNNNNNNHKNKRQREDPSASSLVSTRLPSNTNG). A compositionally biased stretch (low complexity) spans 175 to 193 (QQLAALQQQQQGHNNNNNN). Over residues 204–219 (SASSLVSTRLPSNTNG) the composition is skewed to polar residues. The short motif at 258-261 (IGGH) is the Required for homo- and heterodimerization element. The disordered stretch occupies residues 286 to 320 (TSSGGSAGGVQHHHHNSAAVATATTTSGGDATAAG). The span at 303–320 (AAVATATTTSGGDATAAG) shows a compositional bias: low complexity.

This sequence belongs to the SHI protein family. As to quaternary structure, forms homodimers and heterodimers with LRP1.

It localises to the nucleus. In terms of biological role, transcription activator involved in the transcriptional regulation of terpene biosynthesis in glandular trichomes. Binds to the promoter of the linalool synthase TPS5 and promotes TPS5 gene transactivation. Acts synergistically with MYC1 in the transactivation of TPS5. The chain is Protein EXPRESSION OF TERPENOIDS 1 from Solanum lycopersicum (Tomato).